Reading from the N-terminus, the 344-residue chain is Dihydroorotase (344 aa).

Zn(2+) contacts are provided by histidine 14 and histidine 16. Substrate is bound by residues 16–18 (HVR) and asparagine 42. Zn(2+) is bound by residues lysine 99, histidine 136, and histidine 174. Lysine 99 carries the N6-carboxylysine modification. Histidine 136 serves as a coordination point for substrate. Leucine 219 contributes to the substrate binding site. Aspartate 247 contributes to the Zn(2+) binding site. The active site involves aspartate 247. Residues histidine 251 and alanine 263 each coordinate substrate.

This sequence belongs to the metallo-dependent hydrolases superfamily. DHOase family. Class II DHOase subfamily. As to quaternary structure, homodimer. Requires Zn(2+) as cofactor.

The catalysed reaction is (S)-dihydroorotate + H2O = N-carbamoyl-L-aspartate + H(+). It participates in pyrimidine metabolism; UMP biosynthesis via de novo pathway; (S)-dihydroorotate from bicarbonate: step 3/3. Catalyzes the reversible cyclization of carbamoyl aspartate to dihydroorotate. The sequence is that of Dihydroorotase from Leptothrix cholodnii (strain ATCC 51168 / LMG 8142 / SP-6) (Leptothrix discophora (strain SP-6)).